We begin with the raw amino-acid sequence, 133 residues long: Ribosome-binding factor A (133 aa).

The protein belongs to the RbfA family. Monomer. Binds 30S ribosomal subunits, but not 50S ribosomal subunits or 70S ribosomes.

The protein localises to the cytoplasm. Functionally, one of several proteins that assist in the late maturation steps of the functional core of the 30S ribosomal subunit. Associates with free 30S ribosomal subunits (but not with 30S subunits that are part of 70S ribosomes or polysomes). Required for efficient processing of 16S rRNA. May interact with the 5'-terminal helix region of 16S rRNA. The polypeptide is Ribosome-binding factor A (Salmonella typhi).